A 170-amino-acid chain; its full sequence is Photosystem II extrinsic protein V (170 aa).

The signal sequence occupies residues 1–33 (MASLFSTLQRSLKGLLILVPVLIGLVLASPAEA). Positions 70, 73, 74, and 137 each coordinate heme c.

Belongs to the cytochrome c family. PsbV subfamily. PSII is composed of 1 copy each of membrane proteins PsbA, PsbB, PsbC, PsbD, PsbE, PsbF, PsbH, PsbI, PsbJ, PsbK, PsbL, PsbM, PsbT, PsbX, PsbY, PsbZ, Psb30/Ycf12, peripheral proteins PsbO, CyanoQ (PsbQ), PsbU, PsbV and a large number of cofactors. It forms dimeric complexes. Heme c serves as cofactor.

It localises to the cellular thylakoid membrane. Functionally, one of the extrinsic, lumenal subunits of photosystem II (PSII). PSII is a light-driven water plastoquinone oxidoreductase, using light energy to abstract electrons from H(2)O, generating a proton gradient subsequently used for ATP formation. The extrinsic proteins stabilize the structure of photosystem II oxygen-evolving complex (OEC), the ion environment of oxygen evolution and protect the OEC against heat-induced inactivation. Low-potential cytochrome c that plays a role in the OEC of PSII. This Parasynechococcus marenigrum (strain WH8102) protein is Photosystem II extrinsic protein V.